We begin with the raw amino-acid sequence, 454 residues long: MSFVPGQENAGSRSSSGNRAGNGILKKTTWADQTERGQNNGNRGRRNQPKQTATTQPNTGSVVPHYSWFSGITQFQKGKEFQFAGGQGVPIANGIPPSEQKGYWYRHNRRSFKTPDGQQKQLLPRWYFYYLGTGPHAGASFGDSIEGVFWVANSQADTNTSADIVERDPSSHEAIPTRFAPGTVLPQGFYVEGSGRSAPASRSGSRSQSRGPNNRARSSSNQRQPASTVKPDMAEEIAALVLAKLGKDAGQPKQVTKQSAKEVRQKILNKPRQKRTPNKQCPVQQCFGKRGPNQNFGGPEMLKLGTSDPQFPILAELAPTPGAFFFGSKLELVKKNSGGVDEPTKDVYELQYSGAVRFDSTLPGFETIMKVLNENLNAYQNQAGGADVVSPKPQRKRGTKQTAQKEELDSISVAKPKSAVQRNVSRELTPEDRSLLAQILDDGVVPDGLDDSNV.

The interval 1 to 62 (MSFVPGQENA…ATTQPNTGSV (62 aa)) is disordered. The segment covering 9–23 (NAGSRSSSGNRAGNG) has biased composition (low complexity). Residues 49–61 (PKQTATTQPNTGS) are compositionally biased toward polar residues. An RNA-binding region spans residues 56–197 (QPNTGSVVPH…GFYVEGSGRS (142 aa)). The CoV N NTD domain occupies 64 to 193 (PHYSWFSGIT…VLPQGFYVEG (130 aa)). 3 residues coordinate RNA: Arg109, Arg125, and Arg167. Position 170 is a phosphoserine; by host (Ser170). Phosphothreonine; by host is present on Thr177. Disordered regions lie at residues 186–230 (PQGF…STVK), 271–290 (PRQK…FGKR), and 383–428 (AGGA…SREL). Over residues 193-212 (GSGRSAPASRSGSRSQSRGP) the composition is skewed to low complexity. Ser194 is modified (phosphoserine; by host). Positions 215–227 (RARSSSNQRQPAS) are enriched in polar residues. Positions 260 to 383 (AKEVRQKILN…ENLNAYQNQA (124 aa)) constitute a CoV N CTD domain. The segment at 267 to 384 (ILNKPRQKRT…NLNAYQNQAG (118 aa)) is dimerization. 2 positions are modified to phosphoserine; by host: Ser390 and Ser425. Thr429 is subject to Phosphothreonine; by host.

It belongs to the betacoronavirus nucleocapsid protein family. Homooligomer. Both monomeric and oligomeric forms interact with RNA. Interacts with protein M. Interacts with NSP3; this interaction serves to tether the genome to the newly translated replicase-transcriptase complex at a very early stage of infection. ADP-ribosylated. The ADP-ribosylation is retained in the virion during infection. Post-translationally, phosphorylated on serine and threonine residues.

It localises to the virion. The protein resides in the host endoplasmic reticulum-Golgi intermediate compartment. Its subcellular location is the host Golgi apparatus. Packages the positive strand viral genome RNA into a helical ribonucleocapsid (RNP) and plays a fundamental role during virion assembly through its interactions with the viral genome and membrane protein M. Plays an important role in enhancing the efficiency of subgenomic viral RNA transcription as well as viral replication. The polypeptide is Nucleoprotein (Rattus norvegicus (Rat)).